We begin with the raw amino-acid sequence, 468 residues long: Glutamate--tRNA ligase 2 (468 aa).

Positions 9–19 match the 'HIGH' region motif; it reads PSPTGSLHLGG. The 'KMSKS' region motif lies at 238–242; that stretch reads KLSKR. Lys241 is an ATP binding site.

This sequence belongs to the class-I aminoacyl-tRNA synthetase family. Glutamate--tRNA ligase type 1 subfamily. In terms of assembly, monomer.

Its subcellular location is the cytoplasm. It catalyses the reaction tRNA(Glu) + L-glutamate + ATP = L-glutamyl-tRNA(Glu) + AMP + diphosphate. Its function is as follows. Catalyzes the attachment of glutamate to tRNA(Glu) in a two-step reaction: glutamate is first activated by ATP to form Glu-AMP and then transferred to the acceptor end of tRNA(Glu). The protein is Glutamate--tRNA ligase 2 of Anaplasma phagocytophilum (strain HZ).